Consider the following 855-residue polypeptide: Inactive rhomboid protein 1 (855 aa).

The segment at 1–36 (MSEARRDSTSSLQRKKPPWLKLDIPSAVPPTAEEPS) is disordered. At 1 to 411 (MSEARRDSTS…HRPFFTYWLT (411 aa)) the chain is on the cytoplasmic side. 2 positions are modified to phosphoserine: serine 76 and serine 176. 2 positions are modified to phosphothreonine: threonine 180 and threonine 183. The residue at position 390 (serine 390) is a Phosphoserine. A helical transmembrane segment spans residues 412–432 (FVHSLVTILAVCIYGIAPVGF). Over 433-655 (SQHETVDSVL…NPEVPDQFYR (223 aa)) the chain is Lumenal. Asparagine 583 carries an N-linked (GlcNAc...) asparagine glycan. Residues 656–676 (LWLSLFLHAGILHCLVSICFQ) form a helical membrane-spanning segment. The Cytoplasmic segment spans residues 677-691 (MTVLRDLEKLAGWHR). A helical membrane pass occupies residues 692-712 (IAIIYLLSGVTGNLASAIFLP). The Lumenal segment spans residues 713–714 (YR). The helical transmembrane segment at 715-735 (AEVGPAGSQFGILACLFVELF) threads the bilayer. Residues 736 to 746 (QSWQILARPWR) are Cytoplasmic-facing. A helical membrane pass occupies residues 747–767 (AFFKLLAVVLFLFTFGLLPWI). Topologically, residues 768-772 (DNFAH) are lumenal. A helical transmembrane segment spans residues 773–793 (ISGFISGLFLSFAFLPYISFG). Residues 794–803 (KFDLYRKRCQ) lie on the Cytoplasmic side of the membrane. The helical transmembrane segment at 804–824 (IIIFQVVFLGLLAGLVVLFYF) threads the bilayer. Topologically, residues 825 to 855 (YPVRCEWCEFLTCIPFTDKFCEKYELDAQLH) are lumenal.

It belongs to the peptidase S54 family. In terms of assembly, homodimer, or homooligomer. Interacts with TGFA and HBEGF. Interacts with EGF; may retain EGF in the endoplasmic reticulum and regulates its degradation through the endoplasmic reticulum-associated degradation (ERAD). Interacts (via cytoplasmic N-terminus) with FRMD8/iTAP; this interaction leads to mutual protein stabilization. Interacts with ADAM17/TACE.

It localises to the endoplasmic reticulum membrane. The protein resides in the golgi apparatus membrane. Its function is as follows. Regulates ADAM17 protease, a sheddase of the epidermal growth factor (EGF) receptor ligands and TNF, thereby plays a role in sleep, cell survival, proliferation, migration and inflammation. Does not exhibit any protease activity on its own. This Papio anubis (Olive baboon) protein is Inactive rhomboid protein 1 (RHBDF1).